The following is a 185-amino-acid chain: Ribose 1,5-bisphosphate phosphokinase PhnN (185 aa).

An ATP-binding site is contributed by 10-17 (GPSGSGKD).

The protein belongs to the ribose 1,5-bisphosphokinase family.

It carries out the reaction alpha-D-ribose 1,5-bisphosphate + ATP = 5-phospho-alpha-D-ribose 1-diphosphate + ADP. It functions in the pathway metabolic intermediate biosynthesis; 5-phospho-alpha-D-ribose 1-diphosphate biosynthesis; 5-phospho-alpha-D-ribose 1-diphosphate from D-ribose 5-phosphate (route II): step 3/3. Functionally, catalyzes the phosphorylation of ribose 1,5-bisphosphate to 5-phospho-D-ribosyl alpha-1-diphosphate (PRPP). This Escherichia coli O157:H7 protein is Ribose 1,5-bisphosphate phosphokinase PhnN.